The chain runs to 119 residues: Large ribosomal subunit protein bL20 (119 aa).

The protein belongs to the bacterial ribosomal protein bL20 family.

Binds directly to 23S ribosomal RNA and is necessary for the in vitro assembly process of the 50S ribosomal subunit. It is not involved in the protein synthesizing functions of that subunit. The sequence is that of Large ribosomal subunit protein bL20 from Alkaliphilus oremlandii (strain OhILAs) (Clostridium oremlandii (strain OhILAs)).